Reading from the N-terminus, the 358-residue chain is Molybdenum import ATP-binding protein ModC 2 (358 aa).

Residues 1 to 234 (MPEQGIEAQL…PRLPLNHPDE (234 aa)) form the ABC transporter domain. 35 to 42 (GRSGSGKT) contributes to the ATP binding site. The Mop domain maps to 293–358 (NSSILNILRV…AQIKSVALME (66 aa)).

Belongs to the ABC transporter superfamily. Molybdate importer (TC 3.A.1.8) family. The complex is composed of two ATP-binding proteins (ModC), two transmembrane proteins (ModB) and a solute-binding protein (ModA).

It localises to the cell inner membrane. The catalysed reaction is molybdate(out) + ATP + H2O = molybdate(in) + ADP + phosphate + H(+). Part of the ABC transporter complex ModABC involved in molybdenum import. Responsible for energy coupling to the transport system. The sequence is that of Molybdenum import ATP-binding protein ModC 2 from Azotobacter vinelandii.